A 365-amino-acid chain; its full sequence is N-glycosylase/DNA lyase OGG1 (365 aa).

The segment covering Met1–Val16 has biased composition (polar residues). The interval Met1–Val24 is disordered. Residues Asn162, Arg167, and Arg215 each contribute to the DNA site. Lys261 functions as the Schiff-base intermediate with DNA in the catalytic mechanism. 8-oxoguanine is bound by residues Pro278 and Asp280. His282 provides a ligand contact to DNA. Positions 324 and 328 each coordinate 8-oxoguanine.

It belongs to the type-1 OGG1 family. In terms of tissue distribution, expressed in stems, roots, rosette and cauline leaves, flowers and seeds.

It localises to the nucleus. The catalysed reaction is 2'-deoxyribonucleotide-(2'-deoxyribose 5'-phosphate)-2'-deoxyribonucleotide-DNA = a 3'-end 2'-deoxyribonucleotide-(2,3-dehydro-2,3-deoxyribose 5'-phosphate)-DNA + a 5'-end 5'-phospho-2'-deoxyribonucleoside-DNA + H(+). In terms of biological role, involved in repair of DNA damaged by oxidation by incising DNA at 8-oxoG residues. Excises 7,8-dihydro-8-oxoguanine and 2,6-diamino-4-hydroxy-5-N-methylformamidopyrimidine (Fapy) from damaged DNA. Has a beta-lyase activity that nicks DNA 3' to the lesion. This chain is N-glycosylase/DNA lyase OGG1 (OGG1), found in Arabidopsis thaliana (Mouse-ear cress).